The primary structure comprises 191 residues: A-type ATP synthase subunit E (191 aa).

The protein belongs to the V-ATPase E subunit family. As to quaternary structure, has multiple subunits with at least A(3), B(3), C, D, E, F, H, I and proteolipid K(x). In terms of processing, the N-terminus is blocked.

The protein localises to the cell membrane. Functionally, component of the A-type ATP synthase that produces ATP from ADP in the presence of a proton gradient across the membrane. This chain is A-type ATP synthase subunit E, found in Sulfurisphaera tokodaii (strain DSM 16993 / JCM 10545 / NBRC 100140 / 7) (Sulfolobus tokodaii).